The primary structure comprises 458 residues: Tissue-resident T-cell transcription regulator protein ZNF683 (458 aa).

Disordered regions lie at residues 84-109 (PQDL…TDSE) and 249-275 (TLHS…APTR). 3 C2H2-type zinc fingers span residues 301–323 (YECN…LRVH), 329–351 (FQCA…HLVH), and 357–379 (HQCQ…LRLH).

Belongs to the krueppel C2H2-type zinc-finger protein family. Expressed in tissue-resident memory T (Trm) cell population in non-lymphoid organs, such as skin and gut. Expressed in innate lymphocytes, including tissue-resident natural killer (trNK) and natural killer T (NKT) cells in thymus, spleen and liver.

It is found in the nucleus. Transcription factor that mediates a transcriptional program in various innate and adaptive immune tissue-resident lymphocyte T-cell types such as tissue-resident memory T (Trm), natural killer (trNK) and natural killer T (NKT) cells and negatively regulates gene expression of proteins that promote the egress of tissue-resident T-cell populations from non-lymphoid organs. Plays a role in the development, retention and long-term establishment of adaptive and innate tissue-resident lymphocyte T-cell types in non-lymphoid organs, such as the skin and gut, but also in other nonbarrier tissues like liver and kidney, and therefore may provide immediate immunological protection against reactivating infections or viral reinfection. Also plays a role in the differentiation of both thymic and peripheral NKT cells. Negatively regulates the accumulation of interferon-gamma (IFN-gamma) in NKT cells at steady state or after antigenic stimulation. Positively regulates granzyme B production in NKT cells after innate stimulation. Associates with the transcriptional repressor PRDM1/BLIMP1 to chromatin at gene promoter regions. The chain is Tissue-resident T-cell transcription regulator protein ZNF683 from Mus musculus (Mouse).